The following is a 239-amino-acid chain: Leucine rich adaptor protein 1 (239 aa).

2 LRR repeats span residues 55–83 and 93–114; these read LGDK…LVTL and LLEE…QYSL. Residues 107 to 118 show a composition bias toward low complexity; it reads LTSSQYSLTGGS. A disordered region spans residues 107–140; that stretch reads LTSSQYSLTGGSPERSRRGSWDSLPDTSSTDRLD. 3 positions are modified to phosphoserine: serine 118, serine 126, and serine 129.

As to quaternary structure, forms a tripartite complex with CDC42BPA/CDC42BPB and MYO18A acting as an adapter connecting both. Its binding to CDC42BPA/CDC42BPB results in their activation by abolition of their negative autoregulation. Interacts with CDC42BPA and CDC42BPB. Post-translationally, phosphorylated.

Its subcellular location is the cytoplasm. Functionally, acts as an activator of the canonical NF-kappa-B pathway and drive the production of pro-inflammatory cytokines. Promotes the antigen (Ag)-presenting and priming function of dendritic cells via the canonical NF-kappa-B pathway. In concert with MYO18A and CDC42BPA/CDC42BPB, is involved in modulating lamellar actomyosin retrograde flow that is crucial to cell protrusion and migration. Activates CDC42BPA/CDC42BPB and targets it to actomyosin through its interaction with MYO18A, leading to MYL9/MLC2 phosphorylation and MYH9/MYH10-dependent actomyosin assembly in the lamella. This Rattus norvegicus (Rat) protein is Leucine rich adaptor protein 1 (Lurap1).